The primary structure comprises 164 residues: UPF0304 protein Asuc_0543 (164 aa).

The protein belongs to the UPF0304 family.

This is UPF0304 protein Asuc_0543 from Actinobacillus succinogenes (strain ATCC 55618 / DSM 22257 / CCUG 43843 / 130Z).